The sequence spans 377 residues: WAT1-related protein At5g13670 (377 aa).

Helical transmembrane passes span 9–29 (FIAI…AKLA), 38–58 (VLVA…ALIL), 64–84 (PKLT…EPVV), 99–119 (TFTS…ACVF), 136–156 (VGTM…GNVI), 187–207 (IMLV…AKIL), 214–234 (LSLT…MGLI), 251–271 (LLAS…IGWA), 279–299 (FVSA…TFVF), and 303–323 (VYVG…LVLW). EamA domains follow at residues 18 to 149 (LYAL…MLMT) and 194 to 322 (FSWS…YLVL).

The protein belongs to the drug/metabolite transporter (DMT) superfamily. Plant drug/metabolite exporter (P-DME) (TC 2.A.7.4) family.

It localises to the membrane. The protein is WAT1-related protein At5g13670 of Arabidopsis thaliana (Mouse-ear cress).